Consider the following 503-residue polypeptide: Lysine--tRNA ligase (503 aa).

2 residues coordinate Mg(2+): E414 and E421.

This sequence belongs to the class-II aminoacyl-tRNA synthetase family. Homodimer. Requires Mg(2+) as cofactor.

It localises to the cytoplasm. It catalyses the reaction tRNA(Lys) + L-lysine + ATP = L-lysyl-tRNA(Lys) + AMP + diphosphate. This is Lysine--tRNA ligase from Neisseria gonorrhoeae (strain NCCP11945).